Reading from the N-terminus, the 118-residue chain is NAD(P)H-quinone oxidoreductase subunit M (118 aa).

The protein belongs to the complex I NdhM subunit family. In terms of assembly, NDH-1 can be composed of about 15 different subunits; different subcomplexes with different compositions have been identified which probably have different functions.

The protein resides in the cellular thylakoid membrane. It catalyses the reaction a plastoquinone + NADH + (n+1) H(+)(in) = a plastoquinol + NAD(+) + n H(+)(out). The enzyme catalyses a plastoquinone + NADPH + (n+1) H(+)(in) = a plastoquinol + NADP(+) + n H(+)(out). In terms of biological role, NDH-1 shuttles electrons from an unknown electron donor, via FMN and iron-sulfur (Fe-S) centers, to quinones in the respiratory and/or the photosynthetic chain. The immediate electron acceptor for the enzyme in this species is believed to be plastoquinone. Couples the redox reaction to proton translocation, and thus conserves the redox energy in a proton gradient. Cyanobacterial NDH-1 also plays a role in inorganic carbon-concentration. The chain is NAD(P)H-quinone oxidoreductase subunit M from Rippkaea orientalis (strain PCC 8801 / RF-1) (Cyanothece sp. (strain PCC 8801)).